We begin with the raw amino-acid sequence, 528 residues long: PC4 and SFRS1-interacting protein (528 aa).

A PWWP domain is found at 7-64; the sequence is PGDLIFAKMKGYPHWPARVDEVPDGAVKPPTNKLPIFFFGTHETAFLGPKDIFPYSEN. Lysine 75 participates in a covalent cross-link: Glycyl lysine isopeptide (Lys-Gly) (interchain with G-Cter in SUMO2). The interval 86–347 is disordered; sequence NNPKVKFSSQ…VEKKRETSMD (262 aa). The span at 92–106 shows a compositional bias: polar residues; the sequence is FSSQQVSTKQSNASS. Residues serine 102, serine 105, and serine 106 each carry the phosphoserine modification. Positions 113-135 are enriched in basic and acidic residues; that stretch reads KETSVSKEDTDQEEKASNEDVTK. A phosphothreonine mark is found at threonine 115 and threonine 122. Serine 129 carries the post-translational modification Phosphoserine. Residue threonine 141 is modified to Phosphothreonine. Basic residues predominate over residues 144–153; sequence AARRGRKRKA. Positions 146–156 match the Nuclear localization signal motif; the sequence is RRGRKRKAEKQ. Serine 176 and serine 205 each carry phosphoserine. Basic and acidic residues predominate over residues 212-260; that stretch reads DEDKSKKKGPEEKPPKKQLKKEEEGQKEEEKPRKEPDKKEGKKEVESKR. Position 270 is a phosphoserine (serine 270). Threonine 271 carries the phosphothreonine modification. A phosphoserine mark is found at serine 272 and serine 274. Residues 285 to 300 are compositionally biased toward basic residues; the sequence is KRKGGRHFQAAHRRNM. Residues 303–347 show a composition bias toward basic and acidic residues; it reads GQHEKEAADRKRKQEEQMETEQQTKDEGKKPEVKKVEKKRETSMD. Coiled coils occupy residues 304-332 and 369-393; these read QHEKEAADRKRKQEEQMETEQQTKDEGKK and NRCIEALDELASLQVTMQQAQKHTE. Residues 338–415 form an integrase-binding domain (IBD) region; the sequence is VEKKRETSMD…VSQVIMEKST (78 aa). Serine 432 is subject to Phosphoserine. Position 435 is a phosphothreonine (threonine 435). Serine 441 is modified (phosphoserine). Basic and acidic residues predominate over residues 444–471; sequence EQRQHEEANKTKDQGKKGPNKKLEKEQT. The segment at 444–528 is disordered; the sequence is EQRQHEEANK…VSLKESTLDN (85 aa). Positions 472–492 are enriched in polar residues; that stretch reads GTKSLNGGSDAQESNHPQHNG. Residues 496 to 528 show a composition bias toward basic and acidic residues; that stretch reads EESKDSREAGSKTKTPGEEREAEVSLKESTLDN. Citrulline is present on arginine 515. Serine 520 is subject to Phosphoserine. Threonine 525 carries the phosphothreonine modification.

It belongs to the HDGF family. In terms of assembly, monomer. Interacts with IFRD1/PC4. Interacts (via IBD domain) with POGZ (via IBM motif) and CDCA7L (via IBM motifs). Interacts (via IBD domain) with KMT2A (via IBM motifs) with a moderate affinity whereas interacts with the KMT2A-MEN1 complex with a greater affinity; MEN1 enhances interaction of KMT2A with PSIP1. Interacts (via IBD domain) with IWS1 (via IBM motif), MED1 (via IBM motif) and DBF4 (via IBM motifs). Citrullinated by PADI4.

The protein localises to the nucleus. Transcriptional coactivator involved in neuroepithelial stem cell differentiation and neurogenesis. Involved in particular in lens epithelial cell gene regulation and stress responses. May play an important role in lens epithelial to fiber cell terminal differentiation. May play a protective role during stress-induced apoptosis. The sequence is that of PC4 and SFRS1-interacting protein (Psip1) from Rattus norvegicus (Rat).